We begin with the raw amino-acid sequence, 435 residues long: tRNA modification GTPase MnmE (435 aa).

R20, E77, and K117 together coordinate (6S)-5-formyl-5,6,7,8-tetrahydrofolate. A TrmE-type G domain is found at 214 to 359; sequence GIKVVIVGVP…FLKEIESFCL (146 aa). GTP is bound by residues 224-229, 243-249, and 268-271; these read NSGKSS, TEEEGTT, and DTAG. Residues S228 and T249 each coordinate Mg(2+). A (6S)-5-formyl-5,6,7,8-tetrahydrofolate-binding site is contributed by K435.

This sequence belongs to the TRAFAC class TrmE-Era-EngA-EngB-Septin-like GTPase superfamily. TrmE GTPase family. Homodimer. Heterotetramer of two MnmE and two MnmG subunits. K(+) is required as a cofactor.

The protein resides in the cytoplasm. In terms of biological role, exhibits a very high intrinsic GTPase hydrolysis rate. Involved in the addition of a carboxymethylaminomethyl (cmnm) group at the wobble position (U34) of certain tRNAs, forming tRNA-cmnm(5)s(2)U34. The protein is tRNA modification GTPase MnmE of Bartonella bacilliformis (strain ATCC 35685 / KC583 / Herrer 020/F12,63).